A 168-amino-acid polypeptide reads, in one-letter code: Phosphopantetheine adenylyltransferase (168 aa).

Thr-9 provides a ligand contact to substrate. ATP is bound by residues 9-10 (TF) and His-17. Lys-41, Leu-73, and Arg-87 together coordinate substrate. Residues 88–90 (GLR), Glu-98, and 123–129 (YQFISGT) each bind ATP.

Belongs to the bacterial CoaD family. In terms of assembly, homohexamer. The cofactor is Mg(2+).

It is found in the cytoplasm. It catalyses the reaction (R)-4'-phosphopantetheine + ATP + H(+) = 3'-dephospho-CoA + diphosphate. It functions in the pathway cofactor biosynthesis; coenzyme A biosynthesis; CoA from (R)-pantothenate: step 4/5. Functionally, reversibly transfers an adenylyl group from ATP to 4'-phosphopantetheine, yielding dephospho-CoA (dPCoA) and pyrophosphate. The sequence is that of Phosphopantetheine adenylyltransferase from Paraburkholderia phymatum (strain DSM 17167 / CIP 108236 / LMG 21445 / STM815) (Burkholderia phymatum).